Here is a 43-residue protein sequence, read N- to C-terminus: Methionine aminopeptidase (43 aa).

This sequence belongs to the peptidase M24A family. Methionine aminopeptidase type 1 subfamily. Monomer. Co(2+) is required as a cofactor. Requires Zn(2+) as cofactor. It depends on Mn(2+) as a cofactor. The cofactor is Fe(2+).

It carries out the reaction Release of N-terminal amino acids, preferentially methionine, from peptides and arylamides.. Removes the N-terminal methionine from nascent proteins. The N-terminal methionine is often cleaved when the second residue in the primary sequence is small and uncharged (Met-Ala-, Cys, Gly, Pro, Ser, Thr, or Val). Requires deformylation of the N(alpha)-formylated initiator methionine before it can be hydrolyzed. This chain is Methionine aminopeptidase (map), found in Klebsiella oxytoca.